A 6548-amino-acid chain; its full sequence is Epiplakin (6548 aa).

Thr-33 bears the Phosphothreonine mark. Plectin repeat units lie at residues 41–78 (AALP…TGLG), 79–116 (LTLL…LELK), 117–154 (EKLL…RTLG), 155–192 (WRLL…KETW), 285–322 (RRYL…KGIA), 323–360 (LQLL…PELH), 362–398 (QLLV…QPLA), 399–436 (LRLL…EETR), and 437–470 (QRLS…PETG). Residues 49–1123 (SIAGVYVEAS…KASGLHLLPL (1075 aa)) form an interaction with KRT5 region. A coiled-coil region spans residues 545–565 (SVEELAAELKNIVEQAAATAK). Plectin repeat units lie at residues 611–648 (QRYL…PGTA), 649–686 (LILL…PDVY), 687–724 (AKLL…RDHG), 725–762 (IRLL…QILN), and 766–800 (LDPS…SETG). A coiled-coil region spans residues 851 to 886 (TEDRRRQLLQRYRQRKITLEQVTQLLEKEMRRWTDI). 8 Plectin repeats span residues 931-968 (HRYL…PSTA), 969-1006 (LALL…AEVY), 1007-1044 (GKLK…VEQA), 1224-1284 (QETL…TGLG), 1285-1322 (QQLL…MEQS), 1323-1360 (EHLR…QSEA), 1361-1398 (FPLL…EQTS), and 1402-1436 (TATG…ADTG). The residue at position 1551 (Thr-1551) is a Phosphothreonine. Plectin repeat units lie at residues 1572–1609 (RRSL…PGTA), 1610–1647 (LVLL…KETY), 1648–1685 (MKLL…RDHG), 1686–1723 (IRLL…EEMN), and 1727–1761 (SDPS…PETG). Positions 1580 to 6545 (FIAGVLIQDT…PETGLLFLSL (4966 aa)) are interaction with KRT5. The stretch at 1819–1851 (RKLLREYRAQNIGLENLLEVITSTVEETEKQSQ) forms a coiled coil. Plectin repeat units follow at residues 1898 to 1935 (RVYL…AGFA), 1936 to 1973 (AQML…EDLR), 1974 to 2011 (ERLV…REEA), 2012 to 2049 (LRLL…DDSL), 2225 to 2267 (KRYL…PGTA), 2268 to 2305 (LVLL…GEIQ), 2306 to 2343 (EKLL…RDHG), 2344 to 2381 (IRLL…EDMN), and 2385 to 2419 (ADPG…PETG). 2 positions are modified to phosphoserine: Ser-2430 and Ser-2508. The segment at 2578-2626 (AEETQESKPKPRDASLKQQDTGARGSGTSPDEGDAQDSSESARQQQEQT) is disordered. Basic and acidic residues predominate over residues 2582–2592 (QESKPKPRDAS). 2 stretches are compositionally biased toward polar residues: residues 2593-2606 (LKQQ…SGTS) and 2615-2626 (SSESARQQQEQT). Plectin repeat units lie at residues 2740–2782 (KRYL…PGTA), 2783–2820 (LVLL…GEIQ), 2821–2858 (EKLL…RDHG), 2859–2896 (IRLL…EDMN), and 2900–2934 (ADPG…PETG). The interval 2748–2940 (CIAGVLVPVQ…PETGFYMLQL (193 aa)) is interaction with KRT14. The tract at residues 3093-3144 (AEETQESKPKPRDASLKQQDTGARGSGTSPDEGDAQDSSESARQQQEQTLRA) is disordered. The span at 3097–3107 (QESKPKPRDAS) shows a compositional bias: basic and acidic residues. 2 stretches are compositionally biased toward polar residues: residues 3108 to 3121 (LKQQ…SGTS) and 3130 to 3144 (SSES…TLRA). Ser-3220 is subject to Phosphoserine. 5 Plectin repeats span residues 3255 to 3297 (KRYL…PGTA), 3298 to 3335 (LVLL…GEIQ), 3336 to 3373 (EKLL…RDHG), 3374 to 3411 (IRLL…EDMN), and 3415 to 3449 (ADPG…PETG). Phosphoserine is present on residues Ser-3460 and Ser-3538. The interval 3608 to 3659 (AEETQESKPKPRDASLKQQDTGARGSGTSPDEGDAQDSSESARQQQEQTLRA) is disordered. The span at 3612–3622 (QESKPKPRDAS) shows a compositional bias: basic and acidic residues. Composition is skewed to polar residues over residues 3623-3636 (LKQQ…SGTS) and 3645-3659 (SSES…TLRA). Ser-3735 is modified (phosphoserine). Plectin repeat units follow at residues 3770–3812 (KRYL…PGTA), 3813–3850 (LVLL…GEIQ), 3851–3888 (EKLL…RDHG), 3889–3926 (IRLL…EDMN), and 3930–3964 (ADPG…PETG). 2 positions are modified to phosphoserine: Ser-3975 and Ser-4053. A disordered region spans residues 4123 to 4174 (AEETQESKPKPRDASLKQQDTGARGSGTSPDEGDAQDSSESARQQQEQTLRA). Over residues 4127–4137 (QESKPKPRDAS) the composition is skewed to basic and acidic residues. Composition is skewed to polar residues over residues 4138-4151 (LKQQ…SGTS) and 4160-4174 (SSES…TLRA). Plectin repeat units lie at residues 4285 to 4327 (KRYL…PGTA), 4328 to 4365 (LVLL…GEIQ), 4366 to 4403 (EKLL…RDHG), 4404 to 4441 (IRLL…EDMN), and 4445 to 4479 (ADPG…PETG). The segment at 4638-4689 (AEETQESKPKPRDASLKQQDTGARGSGTSPDEGDAQDSSESARQQQEQTLRA) is disordered. The segment covering 4642 to 4652 (QESKPKPRDAS) has biased composition (basic and acidic residues). Composition is skewed to polar residues over residues 4653–4666 (LKQQ…SGTS) and 4675–4689 (SSES…TLRA). Ser-4765 carries the phosphoserine modification. Plectin repeat units lie at residues 4800–4842 (KRYL…PGTA), 4843–4880 (LVLL…GEIQ), 4881–4918 (EKLL…RDHG), 4919–4956 (IRLL…EDMN), and 4960–4994 (ADPG…PETG). Residues Ser-5005 and Ser-5083 each carry the phosphoserine modification. The disordered stretch occupies residues 5153-5204 (AEETQESKPKPRDASLKQQDTGARGSGTSPDEGDAQDSSESARQQQEQTLRA). The segment covering 5157 to 5167 (QESKPKPRDAS) has biased composition (basic and acidic residues). Polar residues-rich tracts occupy residues 5168-5181 (LKQQ…SGTS) and 5190-5204 (SSES…TLRA). Plectin repeat units follow at residues 5315-5357 (KRYL…PGTA), 5358-5395 (LVLL…GEIQ), 5396-5433 (EKLL…RDHG), 5434-5471 (IRLL…EDMN), and 5475-5509 (ADPG…PETG). Residues 5668 to 5719 (AEETQESKPKPRDASLKQQDTGARGSGTSPDEGDAQDSSESARQQQEQTLRA) are disordered. Over residues 5672–5682 (QESKPKPRDAS) the composition is skewed to basic and acidic residues. Composition is skewed to polar residues over residues 5683-5696 (LKQQ…SGTS) and 5705-5719 (SSES…TLRA). Position 5795 is a phosphoserine (Ser-5795). Plectin repeat units lie at residues 5830–5872 (KRYL…PGTA), 5873–5910 (LVLL…GEIQ), 5911–5948 (EKLL…RDHG), 5949–5986 (IRLL…EDMN), and 5990–6024 (ADPG…PETG). Phosphoserine is present on residues Ser-6035 and Ser-6113. The disordered stretch occupies residues 6183–6234 (AEETQESKPKPRDASLKQQDTGARGSGTSPDEGDAQDSSESARQQQEQTLRA). The segment covering 6187–6197 (QESKPKPRDAS) has biased composition (basic and acidic residues). Composition is skewed to polar residues over residues 6198–6211 (LKQQ…SGTS) and 6220–6234 (SSES…TLRA). The residue at position 6310 (Ser-6310) is a Phosphoserine. 5 Plectin repeats span residues 6345 to 6387 (KRYL…PGTA), 6388 to 6425 (LVLL…GEIQ), 6426 to 6463 (EKLL…KNHG), 6464 to 6501 (IRLL…QEMN), and 6505 to 6539 (ADPG…PETG).

The protein belongs to the plakin or cytolinker family. As to quaternary structure, interacts with KRT5, KRT14 and KRT5/KRT14 heterotetramer; interacts preferentially with assembled filaments rather than keratin monomers. Interacts with KRT8 and KRT18 and KRT8/KRT18 heterotetramer; interacts preferentially with assembled filaments rather than keratin monomers. Interacts with KRT1, VIM and DES; interaction is stronger with KRT1 than with VIM or DES; interaction is dependent of higher-order structure of intermediate filament. In terms of tissue distribution, high levels in skin, small intestine and salivary gland. Lower levels in lung, uterus and liver. Not detected in brain, kidney, muscle, heart or spleen. In skin, expressed in all epidermal layers but not in the dermis. In intestine, expressed exclusively in the epithelial cell layer of the villi. In liver, expressed at hepatocyte margins. Around the region of the wound, expressed in the upper half of the epidermis. Weakly expressed on the basilar side of the suprabasal layer of the epidermis at the wound's edge. Expressed strongly in the upper layer of the epidermis, especially in larger keratinocytes. Expressed in undifferentiated primary keratinocytes. Strongly expressed in ductal cells, and also expressed in acinar cells. Expressed in hepatocytes and cholangiocytes.

Its subcellular location is the cytoplasm. It localises to the cytoskeleton. The protein resides in the apicolateral cell membrane. It is found in the basolateral cell membrane. The protein localises to the cell junction. Its subcellular location is the hemidesmosome. It localises to the tight junction. The protein resides in the cell projection. In terms of biological role, cytoskeletal linker protein that connects to intermediate filaments and controls their reorganization in response to stress. In response to mechanical stress like wound healing, is associated with the machinery for cellular motility by slowing down keratinocyte migration and proliferation and accelerating keratin bundling in proliferating keratinocytes thus contributing to tissue architecture. However in wound healing in corneal epithelium also positively regulates cell differentiation and proliferation and negatively regulates migration thereby controlling corneal epithelium morphogenesis and integrity. In response to cellular stress, plays a role in keratin filament reorganization, probably by protecting keratin filaments against disruption. During liver and pancreas injuries, plays a protective role by chaperoning disease-induced intermediate filament reorganization. This Mus musculus (Mouse) protein is Epiplakin.